The primary structure comprises 152 residues: Ribosome maturation factor RimP (152 aa).

This sequence belongs to the RimP family.

The protein resides in the cytoplasm. Its function is as follows. Required for maturation of 30S ribosomal subunits. The sequence is that of Ribosome maturation factor RimP from Sodalis glossinidius (strain morsitans).